A 369-amino-acid polypeptide reads, in one-letter code: UDP-glucose 4-epimerase 4 (369 aa).

19 to 50 (TVLVTGGAGYIGSHTVLQLLAAGFRVVVADSL) lines the NAD(+) pocket. Position 144 (Ser144) interacts with substrate. Tyr168 serves as the catalytic Proton acceptor.

Belongs to the NAD(P)-dependent epimerase/dehydratase family. The cofactor is NAD(+).

It carries out the reaction UDP-alpha-D-glucose = UDP-alpha-D-galactose. Its pathway is carbohydrate metabolism; galactose metabolism. Its function is as follows. Catalyzes the interconversion between UDP-glucose and UDP-galactose. The polypeptide is UDP-glucose 4-epimerase 4 (UGE-4) (Oryza sativa subsp. japonica (Rice)).